Reading from the N-terminus, the 461-residue chain is Argininosuccinate lyase (461 aa).

Belongs to the lyase 1 family. Argininosuccinate lyase subfamily.

It localises to the cytoplasm. It catalyses the reaction 2-(N(omega)-L-arginino)succinate = fumarate + L-arginine. Its pathway is amino-acid biosynthesis; L-arginine biosynthesis; L-arginine from L-ornithine and carbamoyl phosphate: step 3/3. The polypeptide is Argininosuccinate lyase (Chlorobium chlorochromatii (strain CaD3)).